The primary structure comprises 945 residues: MALKSPAFRKKFPLLVTGSLLALQPLATSFVVAAEQYDCSVSASGGWACAPKTSAAQLPPRPVHDANSVSSSVATAADATGEEASGDKSKLVTEAKGRGLKSRSADYSHLDWVPREKLTAAQLAETGPYCSGSYIEPIRPGMNDKTNKSDAPTFIGAKASRYQQEEQVATLAGDVVMRQGSMQVEADEASLYQAENRGELSGNVRVRDNGALLVGDHADIQLDTGEAKVDNAEYVLHKSRVRGNALYAKRAENAIIRLKDGTYTTCEPNSNAWQLKGNNITLNPATGFGTATNVTLRVKDIPVLYTPYIYFPIDDRRQSGFLPPSFSTGSDTGFMLVTPYYFNLAPNYDATLYPRYMAKRGLLMEGEFRYLTKSSEGQFGAAYLNDDDTDRKKQTDYEKTRYMLNWQHKGGLDSRLMTEVDYTKISDPYYFQDLQTDQIGVKATDYVNQQGVVTYRGDDYTARLNVQAYELASVANITPYNKLPQITFNGALPYHPQGLDFTYETELVRFDRDLLTGNYTDKDGGPIDPVTGAVGTRRLDTNVAGLARANGDRLNLKPGVSLPLNWSYGYLTPSLKYMYTQYNLDLDGTGKEGIVAARNYATATGTRYVGGDYSRNQNRGVPIASLDGGLYFDRNTQWFGKNYRQTLEPRAFYLYVPEEDQKDIPVFDTGEPTFNYASLFRDNRFSGSDRVGDENKLSLGVTSRWIEDNGFQRQRISVGQALYFKDRTVQLPGIDYRTRADATSNVSPYALEYEYRYNRDWRATADYNWDPDSHSARSGSAMFHYQPEDNPNKVVNAGYRYRNDQIRYDQNSGTWKMGGDYGTPGQPGYVKDYYKIQQHDFSVIWPIVPQWNAISRWQYDYNRNRTLEAFGGFEYDNCCWKLRLISRYWVKYDEFSQNAPENEKGDRGIFLQIVLKGLGGVMGTKVESFLDKGIQGYREREDQAF.

The N-terminal stretch at 1–33 is a signal peptide; sequence MALKSPAFRKKFPLLVTGSLLALQPLATSFVVA. Residues 56-98 are disordered; that stretch reads AQLPPRPVHDANSVSSSVATAADATGEEASGDKSKLVTEAKGR. The segment covering 65-79 has biased composition (low complexity); it reads DANSVSSSVATAADA. Over residues 85-98 the composition is skewed to basic and acidic residues; it reads SGDKSKLVTEAKGR.

This sequence belongs to the LptD family. In terms of assembly, component of the lipopolysaccharide transport and assembly complex. Interacts with LptE and LptA.

The protein resides in the cell outer membrane. In terms of biological role, together with LptE, is involved in the assembly of lipopolysaccharide (LPS) at the surface of the outer membrane. This is LPS-assembly protein LptD from Pseudomonas fluorescens (strain ATCC BAA-477 / NRRL B-23932 / Pf-5).